The sequence spans 430 residues: 3-phosphoshikimate 1-carboxyvinyltransferase (430 aa).

Residues lysine 20, serine 21, and arginine 25 each contribute to the 3-phosphoshikimate site. Lysine 20 provides a ligand contact to phosphoenolpyruvate. Phosphoenolpyruvate-binding residues include glycine 92 and arginine 120. Residues serine 166, glutamine 168, aspartate 312, and lysine 339 each coordinate 3-phosphoshikimate. Residue glutamine 168 coordinates phosphoenolpyruvate. Residue aspartate 312 is the Proton acceptor of the active site. Phosphoenolpyruvate-binding residues include arginine 343 and arginine 387.

Belongs to the EPSP synthase family. As to quaternary structure, monomer.

Its subcellular location is the cytoplasm. It catalyses the reaction 3-phosphoshikimate + phosphoenolpyruvate = 5-O-(1-carboxyvinyl)-3-phosphoshikimate + phosphate. The protein operates within metabolic intermediate biosynthesis; chorismate biosynthesis; chorismate from D-erythrose 4-phosphate and phosphoenolpyruvate: step 6/7. In terms of biological role, catalyzes the transfer of the enolpyruvyl moiety of phosphoenolpyruvate (PEP) to the 5-hydroxyl of shikimate-3-phosphate (S3P) to produce enolpyruvyl shikimate-3-phosphate and inorganic phosphate. This Lactococcus lactis subsp. lactis (strain IL1403) (Streptococcus lactis) protein is 3-phosphoshikimate 1-carboxyvinyltransferase.